The sequence spans 183 residues: Dual-action ribosomal maturation protein DarP (183 aa).

Positions 1–23 (MTKQPDDWLDEVPDNENDDDDDE) are disordered. The span at 7 to 23 (DWLDEVPDNENDDDDDE) shows a compositional bias: acidic residues.

Belongs to the DarP family.

Its subcellular location is the cytoplasm. Functionally, member of a network of 50S ribosomal subunit biogenesis factors which assembles along the 30S-50S interface, preventing incorrect 23S rRNA structures from forming. Promotes peptidyl transferase center (PTC) maturation. The polypeptide is Dual-action ribosomal maturation protein DarP (Cronobacter sakazakii (strain ATCC BAA-894) (Enterobacter sakazakii)).